We begin with the raw amino-acid sequence, 377 residues long: MLNTFGDTFRVTTWGESHGKALGAVIDGCPSNLPLTENDIQYELNRRRPGYSLFSTPRKEEDEVEILSGIFEGKTTGTPISCIVYNKSQQSKDYTAIKDTPRPGHADLSYQLKYGNYDYRGGGRSSGRTTIGNVIGGAIAKKLIEYTHKIKVIGYTTEIGTIKGDFNYYNNPEFFESDLNIQKLSNQIEDSVLRCPSTNSNEMNEYVFKAIDGKDSVGGVVEVVIYGLPKGIGNPIFNKLEGRLSSAVMSINSIKGFEVGKGFESSRLFGSEMNDEFYFKNGIICPKTNNAGGILGGISTGAPVVIRASIKPTPSISKTQETVNIKTLETVPIKIGGRHDPIIVPRVIPVIESMVSITIADLMISSGFINPSKLSNI.

R47 lines the NADP(+) pocket. FMN is bound by residues 124 to 126, 252 to 253, G296, 311 to 315, and R338; these read RSS, NS, and KPTPS.

The protein belongs to the chorismate synthase family. FMNH2 is required as a cofactor.

The enzyme catalyses 5-O-(1-carboxyvinyl)-3-phosphoshikimate = chorismate + phosphate. It functions in the pathway metabolic intermediate biosynthesis; chorismate biosynthesis; chorismate from D-erythrose 4-phosphate and phosphoenolpyruvate: step 7/7. Functionally, catalyzes the anti-1,4-elimination of the C-3 phosphate and the C-6 proR hydrogen from 5-enolpyruvylshikimate-3-phosphate (EPSP) to yield chorismate, which is the branch point compound that serves as the starting substrate for the three terminal pathways of aromatic amino acid biosynthesis. This reaction introduces a second double bond into the aromatic ring system. The chain is Chorismate synthase from Methanococcus vannielii (strain ATCC 35089 / DSM 1224 / JCM 13029 / OCM 148 / SB).